The following is a 397-amino-acid chain: Elongation factor Tu (397 aa).

The 197-residue stretch at 10–206 (KPHVNIGTIG…AVDDSIPEPQ (197 aa)) folds into the tr-type G domain. The interval 19 to 26 (GHIDHGKT) is G1. Residue 19-26 (GHIDHGKT) participates in GTP binding. Residue Thr-26 coordinates Mg(2+). Positions 62–66 (GITIS) are G2. Positions 83–86 (DCPG) are G3. GTP is bound by residues 83-87 (DCPGH) and 138-141 (NKAD). The tract at residues 138–141 (NKAD) is G4. A G5 region spans residues 176–178 (SAL).

The protein belongs to the TRAFAC class translation factor GTPase superfamily. Classic translation factor GTPase family. EF-Tu/EF-1A subfamily. As to quaternary structure, monomer.

Its subcellular location is the cytoplasm. The catalysed reaction is GTP + H2O = GDP + phosphate + H(+). In terms of biological role, GTP hydrolase that promotes the GTP-dependent binding of aminoacyl-tRNA to the A-site of ribosomes during protein biosynthesis. The sequence is that of Elongation factor Tu from Frankia alni (strain DSM 45986 / CECT 9034 / ACN14a).